The sequence spans 344 residues: tRNA N6-adenosine threonylcarbamoyltransferase (344 aa).

Residues His111 and His115 each contribute to the Fe cation site. Substrate contacts are provided by residues 134-138, Asp167, Gly180, Asp184, and Asn277; that span reads LVSGG. Residue Asp305 participates in Fe cation binding.

The protein belongs to the KAE1 / TsaD family. The cofactor is Fe(2+).

Its subcellular location is the cytoplasm. It catalyses the reaction L-threonylcarbamoyladenylate + adenosine(37) in tRNA = N(6)-L-threonylcarbamoyladenosine(37) in tRNA + AMP + H(+). Functionally, required for the formation of a threonylcarbamoyl group on adenosine at position 37 (t(6)A37) in tRNAs that read codons beginning with adenine. Is involved in the transfer of the threonylcarbamoyl moiety of threonylcarbamoyl-AMP (TC-AMP) to the N6 group of A37, together with TsaE and TsaB. TsaD likely plays a direct catalytic role in this reaction. The polypeptide is tRNA N6-adenosine threonylcarbamoyltransferase (Microcystis aeruginosa (strain NIES-843 / IAM M-2473)).